The primary structure comprises 534 residues: Calcium-dependent protein kinase 18 (534 aa).

Residues 1-49 (MGLCFSSPKATRRGTGSRNPNPDSPTQGKASEKVSNKNKKNTKKIQLRH) are disordered. Glycine 2 is lipidated: N-myristoyl glycine. The span at 14–29 (GTGSRNPNPDSPTQGK) shows a compositional bias: polar residues. The span at 36 to 47 (NKNKKNTKKIQL) shows a compositional bias: basic residues. One can recognise a Protein kinase domain in the interval 71 to 331 (YTIGKLLGHG…AAQALSHSWV (261 aa)). Residues 77–85 (LGHGQFGFT) and lysine 100 contribute to the ATP site. Catalysis depends on aspartate 197, which acts as the Proton acceptor. Serine 237 carries the phosphoserine modification. Residues 337 to 367 (ASEVPIDISVLNNMRQFVKFSRLKQIALRAL) are autoinhibitory domain. 4 EF-hand domains span residues 374–409 (DELD…DVPW), 411–446 (LKDA…VNQL), 453–488 (KWQQ…KGSI), and 491–518 (LLEE…ASLK). Positions 387, 389, 391, 393, 398, 424, 426, 428, 435, 466, 468, 470, 477, 496, 498, 500, and 502 each coordinate Ca(2+). A Phosphoserine modification is found at serine 504. Glutamate 507 provides a ligand contact to Ca(2+).

Belongs to the protein kinase superfamily. Ser/Thr protein kinase family. CDPK subfamily.

It localises to the membrane. It carries out the reaction L-seryl-[protein] + ATP = O-phospho-L-seryl-[protein] + ADP + H(+). The enzyme catalyses L-threonyl-[protein] + ATP = O-phospho-L-threonyl-[protein] + ADP + H(+). With respect to regulation, activated by calcium. Autophosphorylation may play an important role in the regulation of the kinase activity. Functionally, may play a role in signal transduction pathways that involve calcium as a second messenger. This Arabidopsis thaliana (Mouse-ear cress) protein is Calcium-dependent protein kinase 18 (CPK18).